We begin with the raw amino-acid sequence, 193 residues long: Molybdenum cofactor guanylyltransferase (193 aa).

GTP contacts are provided by residues 8-10, Lys-21, Asp-67, and Asp-98; that span reads LAG. Asp-98 contributes to the Mg(2+) binding site.

The protein belongs to the MobA family. Monomer. Mg(2+) serves as cofactor.

The protein localises to the cytoplasm. It catalyses the reaction Mo-molybdopterin + GTP + H(+) = Mo-molybdopterin guanine dinucleotide + diphosphate. Transfers a GMP moiety from GTP to Mo-molybdopterin (Mo-MPT) cofactor (Moco or molybdenum cofactor) to form Mo-molybdopterin guanine dinucleotide (Mo-MGD) cofactor. The sequence is that of Molybdenum cofactor guanylyltransferase from Cereibacter sphaeroides (Rhodobacter sphaeroides).